The sequence spans 595 residues: Guanylate-binding protein 3 (595 aa).

The interval 1 to 309 is GTPase domain (Globular); the sequence is MAPEIHMTGP…NAISRGDLPC (309 aa). Residues 35–276 enclose the GB1/RHD3-type G domain; that stretch reads TQPVVVVAIV…FCSYIFSNSK (242 aa). GTP is bound by residues 45–52, 67–69, and 97–101; these read GLYRTGKS, LGS, and DTEGL. The stretch at 482–595 forms a coiled coil; sequence EKEKEIEVEC…KRYMSHKLKI (114 aa).

Belongs to the TRAFAC class dynamin-like GTPase superfamily. GB1/RHD3 GTPase family. GB1 subfamily. Heterodimer with other family members, including GBP1, GBP2 and GBP5. Dimerization regulates subcellular location.

It localises to the cytoplasm. It is found in the perinuclear region. The protein resides in the golgi apparatus membrane. The enzyme catalyses GTP + H2O = GDP + phosphate + H(+). Its function is as follows. Interferon (IFN)-inducible GTPase that plays important roles in innate immunity against a diverse range of bacterial, viral and protozoan pathogens. Hydrolyzes GTP very efficiently; GDP rather than GMP is the major reaction product. Following infection, recruited to the pathogen-containing vacuoles or vacuole-escaped bacteria and acts as a positive regulator of inflammasome assembly by promoting the release of inflammasome ligands from bacteria. Acts by promoting lysis of pathogen-containing vacuoles, releasing pathogens into the cytosol. Following pathogen release in the cytosol, promotes recruitment of proteins that mediate bacterial cytolysis: this liberates ligands that are detected by inflammasomes, such as lipopolysaccharide (LPS) that activates the non-canonical CASP4/CASP11 inflammasome or double-stranded DNA (dsDNA) that activates the AIM2 inflammasome. Exhibits antiviral activity against influenza virus. Shows the most prominent antiviral activity in epithelial cells. This chain is Guanylate-binding protein 3 (GBP3), found in Homo sapiens (Human).